We begin with the raw amino-acid sequence, 232 residues long: Vacuolar iron transporter homolog 1 (232 aa).

The Cytoplasmic segment spans residues 1–59; sequence MAIDLGCHVGCASPETKQEETADPTAAPVVVDDVEAAAGGRRPGDGGGVNYVARAQWLR. Residues 60–80 form a helical membrane-spanning segment; the sequence is AAVLGANDGLVSVASLMVGVG. Residues 81 to 89 lie on the Vacuolar side of the membrane; it reads AANGTRRAM. A helical transmembrane segment spans residues 90 to 110; sequence LVSGLAGLVAGACSMAIGEFV. The Cytoplasmic segment spans residues 111 to 148; sequence SVYAQCDIQAAQIERARGGKDADGGEEEEELPSPTMAA. Residues 149-169 traverse the membrane as a helical segment; it reads VASALSFAAGAALPLLAGGFV. Over 170 to 175 the chain is Vacuolar; sequence RPWAAR. The helical transmembrane segment at 176–196 threads the bilayer; it reads VAAVCAASSLGLAGFGVASAY. Topologically, residues 197-208 are cytoplasmic; the sequence is LGGAGVARSGVR. A helical membrane pass occupies residues 209–229; that stretch reads MLVGGWLAMAVTYGVLKLFGM. Residues 230–232 are Vacuolar-facing; it reads HGV.

Belongs to the CCC1 family.

It localises to the vacuole membrane. It catalyses the reaction Fe(2+)(in) = Fe(2+)(out). In terms of biological role, probable vacuolar iron transporter that may be involved in the regulation of iron distribution throughout the plant. This Oryza sativa subsp. japonica (Rice) protein is Vacuolar iron transporter homolog 1.